Reading from the N-terminus, the 174-residue chain is Adenine phosphoribosyltransferase (174 aa).

This sequence belongs to the purine/pyrimidine phosphoribosyltransferase family. In terms of assembly, homodimer.

The protein resides in the cytoplasm. The catalysed reaction is AMP + diphosphate = 5-phospho-alpha-D-ribose 1-diphosphate + adenine. It functions in the pathway purine metabolism; AMP biosynthesis via salvage pathway; AMP from adenine: step 1/1. Catalyzes a salvage reaction resulting in the formation of AMP, that is energically less costly than de novo synthesis. The sequence is that of Adenine phosphoribosyltransferase from Nitrosomonas eutropha (strain DSM 101675 / C91 / Nm57).